The chain runs to 307 residues: Streptomycin 6-kinase (307 aa).

133–145 contributes to the streptomycin binding site; it reads LAGLLARLVSVPA. Aspartate 201 serves as the catalytic Proton acceptor.

Belongs to the aminoglycoside phosphotransferase family.

The catalysed reaction is streptomycin + ATP = streptomycin 6-phosphate + ADP + H(+). In terms of biological role, the aminoglycoside phosphotransferases achieve inactivation of their antibiotic substrates by phosphorylation. This Streptomyces glaucescens protein is Streptomycin 6-kinase (sph).